The following is a 292-amino-acid chain: Sulfofructosephosphate aldolase (292 aa).

K193 acts as the Schiff-base intermediate with substrate in catalysis.

It belongs to the aldolase LacD family. In terms of assembly, homotetramer.

The catalysed reaction is 6-deoxy-6-sulfo-D-fructose 1-phosphate = (2S)-3-sulfolactaldehyde + dihydroxyacetone phosphate. In terms of biological role, cleaves 6-deoxy-6-sulfo-D-fructose 1-phosphate (SFP) to form dihydroxyacetone phosphate (DHAP) and 3-sulfolactaldehyde (SLA). The sequence is that of Sulfofructosephosphate aldolase (yihT) from Salmonella typhi.